We begin with the raw amino-acid sequence, 303 residues long: N-acetyl-D-glucosamine kinase (303 aa).

Residues 4–11 (GFDIGGTK) and 133–140 (GVGGGLVL) each bind ATP. Zn(2+) contacts are provided by His157, Cys177, Cys179, and Cys184.

Belongs to the ROK (NagC/XylR) family. NagK subfamily.

It carries out the reaction N-acetyl-D-glucosamine + ATP = N-acetyl-D-glucosamine 6-phosphate + ADP + H(+). Its pathway is cell wall biogenesis; peptidoglycan recycling. Functionally, catalyzes the phosphorylation of N-acetyl-D-glucosamine (GlcNAc) derived from cell-wall degradation, yielding GlcNAc-6-P. The sequence is that of N-acetyl-D-glucosamine kinase from Salmonella newport (strain SL254).